The sequence spans 521 residues: Probable inorganic phosphate transporter 1-3 (521 aa).

Residues 1 to 24 (MADQQLGVLKALDVAKTQLYHFTA) lie on the Cytoplasmic side of the membrane. The helical transmembrane segment at 25–45 (IVIAGMGFFTDAYDLFCVSLV) threads the bilayer. The Extracellular segment spans residues 46-70 (TKLLGRLYYFNPTSAKPGSLPPHVA). The chain crosses the membrane as a helical span at residues 71-91 (AAVNGVALCGTLAGQLFFGWL). The Cytoplasmic segment spans residues 92 to 99 (GDKLGRKK). The helical transmembrane segment at 100-120 (VYGITLIMMILCSVASGLSLG) threads the bilayer. At 121 to 131 (NSAKGVMTTLC) the chain is on the extracellular side. The chain crosses the membrane as a helical span at residues 132-152 (FFRFWLGFGIGGDYPLSATIM). At 153–161 (SEYANKKTR) the chain is on the cytoplasmic side. Residues 162-182 (GAFIAAVFAMQGVGILAGGFV) traverse the membrane as a helical segment. Residues 183-211 (ALAVSSIFDKKFPSPTYEQDRFLSTPPQA) lie on the Extracellular side of the membrane. A helical membrane pass occupies residues 212–232 (DYIWRIIVMFGALPAALTYYW). Residues 233–292 (RMKMPETARYTALVAKNIKQATADMSKVLQTDLELEERVEDDVKDPKKNYGLFSKEFLRR) are Cytoplasmic-facing. The helical transmembrane segment at 293–313 (HGLHLLGTTSTWFLLDIAFYS) threads the bilayer. Topologically, residues 314–348 (QNLFQKDIFSAIGWIPKAATMNAIHEVFKIARAQT) are extracellular. The helical transmembrane segment at 349–369 (LIALCSTVPGYWFTVAFIDII) threads the bilayer. Residues 370-371 (GR) lie on the Cytoplasmic side of the membrane. A helical membrane pass occupies residues 372-392 (FAIQLMGFFMMTVFMFAIAFP). At 393–402 (YNHWILPDNR) the chain is on the extracellular side. A helical membrane pass occupies residues 403–423 (IGFVVMYSLTFFFANFGPNAT). Residues 424-441 (TFIVPAEIFPARLRSTCH) are Cytoplasmic-facing. A helical membrane pass occupies residues 442 to 462 (GISAATGKAGAIVGAFGFLYA). Residues 463-484 (AQPQDKTKTDAGYPPGIGVKNS) are Extracellular-facing. A helical membrane pass occupies residues 485-505 (LIMLGVINFVGMLFTFLVPEP). Residues 506 to 521 (KGKSLEELSGEAEVDK) lie on the Cytoplasmic side of the membrane.

The protein belongs to the major facilitator superfamily. Phosphate:H(+) symporter (TC 2.A.1.9) family. As to expression, mainly expressed in roots, especially in the stele of the primary root, the pericycle and trichoblasts of secondary roots. To a lower extent, present in hydathodes and vascular tissues of young leaves.

It is found in the membrane. High-affinity transporter for external inorganic phosphate. This Arabidopsis thaliana (Mouse-ear cress) protein is Probable inorganic phosphate transporter 1-3 (PHT1-3).